Consider the following 353-residue polypeptide: (-)-beta-caryophyllene synthase ((2E,6E)-farnesyl diphosphate cyclizing) (353 aa).

Residues Asp-85 and Asp-89 each contribute to the Mg(2+) site. Positions 85 to 89 (DDQFD) match the DDXXD motif motif. Arg-179 lines the substrate pocket. Mg(2+) contacts are provided by Asn-225 and Ser-229. Lys-232 lines the substrate pocket. Mg(2+) is bound at residue Glu-233. 320 to 321 (RF) is a binding site for substrate.

Belongs to the terpene synthase family. Mg(2+) serves as cofactor.

It carries out the reaction (2E,6E)-farnesyl diphosphate = (-)-(E)-beta-caryophyllene + diphosphate. It participates in secondary metabolite biosynthesis; terpenoid biosynthesis. Catalyzes the conversion of (2E,6E)-farnesyl diphosphate (FPP) to yield the bicyclic sesquiterpene (2S,10R)-(-)-(E)-beta-caryophyllene via a probable 1,10-cyclization, which could involve the abstraction of the pyrophosphate from FPP to yield a (E,E)-germacradienyl cation. The chain is (-)-beta-caryophyllene synthase ((2E,6E)-farnesyl diphosphate cyclizing) (ptlA) from Saccharothrix espanaensis (strain ATCC 51144 / DSM 44229 / JCM 9112 / NBRC 15066 / NRRL 15764).